Consider the following 289-residue polypeptide: MAKWLGAPLARGVSTATRAKDSDRQDACRILDDALRDGELSMEEHRERVSAATKAVTLGDLQRLVADLQVESAPAQMPALKSRAKRTELGLLAAAFVASVLLGVGIGWGVYGNTRSPLDFTSDPGAKPDGIAPVVLTPPRQLHSLGGLTGLLEQTRKRFGDTMGYRLVIYPEYASLDRVDPADDRRVLAYTYRGGWGDATSSAKSIADVSVVDLSKFDAKTAVGIMRGAPETLGLKQSDVKSMYLIVDPAKDPTTPAALSLSLYVSSDYGGGYLVFAGDGTIKHVSYPS.

Positions 1–19 are cleaved as a signal peptide; that stretch reads MAKWLGAPLARGVSTATRA. 2 helical membrane-spanning segments follow: residues 90 to 110 and 257 to 277; these read GLLA…GWGV and AALS…LVFA.

The protein resides in the cell membrane. This is an uncharacterized protein from Mycobacterium tuberculosis (strain CDC 1551 / Oshkosh).